The chain runs to 335 residues: Histidinol-phosphate aminotransferase (335 aa).

The residue at position 202 (Lys202) is an N6-(pyridoxal phosphate)lysine.

The protein belongs to the class-II pyridoxal-phosphate-dependent aminotransferase family. Histidinol-phosphate aminotransferase subfamily. In terms of assembly, homodimer. Requires pyridoxal 5'-phosphate as cofactor.

It catalyses the reaction L-histidinol phosphate + 2-oxoglutarate = 3-(imidazol-4-yl)-2-oxopropyl phosphate + L-glutamate. The protein operates within amino-acid biosynthesis; L-histidine biosynthesis; L-histidine from 5-phospho-alpha-D-ribose 1-diphosphate: step 7/9. This is Histidinol-phosphate aminotransferase from Thermotoga neapolitana (strain ATCC 49049 / DSM 4359 / NBRC 107923 / NS-E).